The primary structure comprises 278 residues: MGIRKYKPTTPGRRGSSVSDFVELTRSTPEKSLLVAKPKTGGRNNTGRITTRHIGGGHKQAYRIIDFKRYDKDGVPAKVAHIEYDPNRTARIALLHYADGEKRYIIAPDGVGQGTVVVSGPEADIKPGNNLPLRNIPVGTTVHAVELRPGGGAKMGRSAGASVQLVAREGKYATVRLPSGEMRMVDIRCRATIGEVGNAEQININWGKAGRNRWKGIRPTVRGVVMNPIDHPHGGGEGRTSGGRHPVSPWGKPEGRTRNKKKASSRLIVRRRKSGKKR.

Disordered stretches follow at residues 1–20 (MGIR…SVSD) and 225–278 (VMNP…GKKR). The segment covering 258 to 278 (RNKKKASSRLIVRRRKSGKKR) has biased composition (basic residues).

The protein belongs to the universal ribosomal protein uL2 family. Part of the 50S ribosomal subunit. Forms a bridge to the 30S subunit in the 70S ribosome.

Functionally, one of the primary rRNA binding proteins. Required for association of the 30S and 50S subunits to form the 70S ribosome, for tRNA binding and peptide bond formation. It has been suggested to have peptidyltransferase activity; this is somewhat controversial. Makes several contacts with the 16S rRNA in the 70S ribosome. The polypeptide is Large ribosomal subunit protein uL2 (Cutibacterium acnes (strain DSM 16379 / KPA171202) (Propionibacterium acnes)).